The primary structure comprises 186 residues: Threonylcarbamoyl-AMP synthase (186 aa).

Residues 2 to 186 (PNEFELAVAA…ARTGAIIRPS (185 aa)) form the YrdC-like domain.

It belongs to the SUA5 family. TsaC subfamily.

It localises to the cytoplasm. The enzyme catalyses L-threonine + hydrogencarbonate + ATP = L-threonylcarbamoyladenylate + diphosphate + H2O. Required for the formation of a threonylcarbamoyl group on adenosine at position 37 (t(6)A37) in tRNAs that read codons beginning with adenine. Catalyzes the conversion of L-threonine, HCO(3)(-)/CO(2) and ATP to give threonylcarbamoyl-AMP (TC-AMP) as the acyladenylate intermediate, with the release of diphosphate. The chain is Threonylcarbamoyl-AMP synthase from Aeromonas hydrophila subsp. hydrophila (strain ATCC 7966 / DSM 30187 / BCRC 13018 / CCUG 14551 / JCM 1027 / KCTC 2358 / NCIMB 9240 / NCTC 8049).